A 455-amino-acid chain; its full sequence is Bleomycin hydrolase (455 aa).

Met1 is modified (N-acetylmethionine). Active-site residues include Cys73 and His372. Position 391 is an N6-acetyllysine (Lys391). Residue Asn396 is part of the active site.

It belongs to the peptidase C1 family. Homohexamer. Interacts with NUDT12 (via ANK repeats).

Its subcellular location is the cytoplasm. It localises to the cytoplasmic granule. It catalyses the reaction Inactivates bleomycin B2 (a cytotoxic glycometallopeptide) by hydrolysis of a carboxyamide bond of beta-aminoalanine, but also shows general aminopeptidase activity. The specificity varies somewhat with source, but amino acid arylamides of Met, Leu and Ala are preferred.. The normal physiological role of BLM hydrolase is unknown, but it catalyzes the inactivation of the antitumor drug BLM (a glycopeptide) by hydrolyzing the carboxamide bond of its B-aminoalaninamide moiety thus protecting normal and malignant cells from BLM toxicity. In Mus musculus (Mouse), this protein is Bleomycin hydrolase (Blmh).